The following is a 311-amino-acid chain: Tyrosine recombinase XerD (311 aa).

The region spanning 2 to 95 is the Core-binding (CB) domain; it reads KTLALQLQGY…AVRGLHRFAA (94 aa). In terms of domain architecture, Tyr recombinase spans 116–304; that stretch reads RLPKSLTIDE…TVHALREVWA (189 aa). Active-site residues include Arg160, Lys184, His256, Arg259, and His282. The active-site O-(3'-phospho-DNA)-tyrosine intermediate is the Tyr291.

It belongs to the 'phage' integrase family. XerD subfamily. In terms of assembly, forms a cyclic heterotetrameric complex composed of two molecules of XerC and two molecules of XerD.

The protein resides in the cytoplasm. Site-specific tyrosine recombinase, which acts by catalyzing the cutting and rejoining of the recombining DNA molecules. The XerC-XerD complex is essential to convert dimers of the bacterial chromosome into monomers to permit their segregation at cell division. It also contributes to the segregational stability of plasmids. The protein is Tyrosine recombinase XerD of Mycobacterium tuberculosis (strain CDC 1551 / Oshkosh).